We begin with the raw amino-acid sequence, 84 residues long: MAHKKGGGSTKNGRDSNPKYLGVKAAGGSTVSAGTIILRQRGTVIKPGNNAGIGRDHTIFSLIDGVVTFRNGRNNKKQVDILPC.

A disordered region spans residues M1 to L21.

The protein belongs to the bacterial ribosomal protein bL27 family.

This chain is Large ribosomal subunit protein bL27, found in Chlorobium limicola (strain DSM 245 / NBRC 103803 / 6330).